Reading from the N-terminus, the 370-residue chain is UDP-N-acetylglucosamine--N-acetylmuramyl-(pentapeptide) pyrophosphoryl-undecaprenol N-acetylglucosamine transferase (370 aa).

Residues 20–22 (TAG), N134, R170, S204, I257, and Q301 each bind UDP-N-acetyl-alpha-D-glucosamine.

It belongs to the glycosyltransferase 28 family. MurG subfamily.

The protein resides in the cell membrane. It carries out the reaction di-trans,octa-cis-undecaprenyl diphospho-N-acetyl-alpha-D-muramoyl-L-alanyl-D-glutamyl-meso-2,6-diaminopimeloyl-D-alanyl-D-alanine + UDP-N-acetyl-alpha-D-glucosamine = di-trans,octa-cis-undecaprenyl diphospho-[N-acetyl-alpha-D-glucosaminyl-(1-&gt;4)]-N-acetyl-alpha-D-muramoyl-L-alanyl-D-glutamyl-meso-2,6-diaminopimeloyl-D-alanyl-D-alanine + UDP + H(+). Its pathway is cell wall biogenesis; peptidoglycan biosynthesis. Cell wall formation. Catalyzes the transfer of a GlcNAc subunit on undecaprenyl-pyrophosphoryl-MurNAc-pentapeptide (lipid intermediate I) to form undecaprenyl-pyrophosphoryl-MurNAc-(pentapeptide)GlcNAc (lipid intermediate II). In Corynebacterium jeikeium (strain K411), this protein is UDP-N-acetylglucosamine--N-acetylmuramyl-(pentapeptide) pyrophosphoryl-undecaprenol N-acetylglucosamine transferase.